The primary structure comprises 242 residues: Probable proteasome subunit alpha type-7 (242 aa).

The protein belongs to the peptidase T1A family. The 26S proteasome consists of a 20S proteasome core and two 19S regulatory subunits. The 20S proteasome core is composed of 28 subunits that are arranged in four stacked rings, resulting in a barrel-shaped structure. The two end rings are each formed by seven alpha subunits, and the two central rings are each formed by seven beta subunits. The catalytic chamber with the active sites is on the inside of the barrel.

The protein resides in the cytoplasm. Its subcellular location is the nucleus. Functionally, the proteasome degrades poly-ubiquitinated proteins in the cytoplasm and in the nucleus. It is essential for the regulated turnover of proteins and for the removal of misfolded proteins. The proteasome is a multicatalytic proteinase complex that is characterized by its ability to cleave peptides with Arg, Phe, Tyr, Leu, and Glu adjacent to the leaving group at neutral or slightly basic pH. It has an ATP-dependent proteolytic activity. The sequence is that of Probable proteasome subunit alpha type-7 (PRE10) from Encephalitozoon cuniculi (strain GB-M1) (Microsporidian parasite).